Consider the following 62-residue polypeptide: Cobrotoxin II (62 aa).

Positions 1-16 (LECHNQQSSQTPTTTG) are enriched in polar residues. A disordered region spans residues 1–23 (LECHNQQSSQTPTTTGCSGGENN). 4 disulfides stabilise this stretch: cysteine 3/cysteine 24, cysteine 17/cysteine 41, cysteine 43/cysteine 54, and cysteine 55/cysteine 60.

It belongs to the three-finger toxin family. Short-chain subfamily. Type I alpha-neurotoxin sub-subfamily. In terms of tissue distribution, expressed by the venom gland.

The protein localises to the secreted. Binds to muscle nicotinic acetylcholine receptor (nAChR) and inhibit acetylcholine from binding to the receptor, thereby impairing neuromuscular transmission. In Naja kaouthia (Monocled cobra), this protein is Cobrotoxin II.